A 746-amino-acid polypeptide reads, in one-letter code: Protein zyg-11 homolog (746 aa).

LRR repeat units follow at residues 185–209 (LPRLESLDISNTSVSNLTPLLGLRS), 216–241 (MHQLKRLEMTTAQLLAVLSQLEVLQH), and 265–289 (LPQLVSLDVSGRKQVTDAAVKAFVE).

The protein belongs to the zyg-11 family.

Its function is as follows. Serves as substrate adapter subunit in an E3 ubiquitin ligase complex zyg11-cul2-elongin BC. Targets substrates bearing N-terminal glycine degrons for proteasomal degradation. The protein is Protein zyg-11 homolog (zyg11) of Danio rerio (Zebrafish).